The sequence spans 362 residues: Phosphoserine aminotransferase (362 aa).

Arg-42 provides a ligand contact to L-glutamate. Trp-102, Thr-154, Asp-174, and Gln-197 together coordinate pyridoxal 5'-phosphate. At Lys-198 the chain carries N6-(pyridoxal phosphate)lysine. 239 to 240 lines the pyridoxal 5'-phosphate pocket; it reads NT.

The protein belongs to the class-V pyridoxal-phosphate-dependent aminotransferase family. SerC subfamily. Homodimer. Pyridoxal 5'-phosphate is required as a cofactor.

Its subcellular location is the cytoplasm. The enzyme catalyses O-phospho-L-serine + 2-oxoglutarate = 3-phosphooxypyruvate + L-glutamate. It catalyses the reaction 4-(phosphooxy)-L-threonine + 2-oxoglutarate = (R)-3-hydroxy-2-oxo-4-phosphooxybutanoate + L-glutamate. It participates in amino-acid biosynthesis; L-serine biosynthesis; L-serine from 3-phospho-D-glycerate: step 2/3. Its pathway is cofactor biosynthesis; pyridoxine 5'-phosphate biosynthesis; pyridoxine 5'-phosphate from D-erythrose 4-phosphate: step 3/5. Its function is as follows. Catalyzes the reversible conversion of 3-phosphohydroxypyruvate to phosphoserine and of 3-hydroxy-2-oxo-4-phosphonooxybutanoate to phosphohydroxythreonine. In Haemophilus ducreyi (strain 35000HP / ATCC 700724), this protein is Phosphoserine aminotransferase.